We begin with the raw amino-acid sequence, 180 residues long: Ribosome rescue factor SmrB (180 aa).

The region spanning 98–173 (LDLHGLTQLQ…GNAALLVLVA (76 aa)) is the Smr domain.

This sequence belongs to the SmrB family. As to quaternary structure, associates with collided ribosomes, but not with correctly translating polysomes.

In terms of biological role, acts as a ribosome collision sensor. Detects stalled/collided disomes (pairs of ribosomes where the leading ribosome is stalled and a second ribosome has collided with it) and endonucleolytically cleaves mRNA at the 5' boundary of the stalled ribosome. Stalled/collided disomes form a new interface (primarily via the 30S subunits) that binds SmrB. Cleaved mRNA becomes available for tmRNA ligation, leading to ribosomal subunit dissociation and rescue of stalled ribosomes. In Pectobacterium atrosepticum (strain SCRI 1043 / ATCC BAA-672) (Erwinia carotovora subsp. atroseptica), this protein is Ribosome rescue factor SmrB.